The primary structure comprises 274 residues: 3-methyl-2-oxobutanoate hydroxymethyltransferase (274 aa).

Residues Asp46 and Asp85 each coordinate Mg(2+). 3-methyl-2-oxobutanoate is bound by residues 46–47 (DS), Asp85, and Lys115. Glu117 contributes to the Mg(2+) binding site. Residue Glu184 is the Proton acceptor of the active site.

The protein belongs to the PanB family. In terms of assembly, homodecamer; pentamer of dimers. Requires Mg(2+) as cofactor.

The protein localises to the cytoplasm. It catalyses the reaction 3-methyl-2-oxobutanoate + (6R)-5,10-methylene-5,6,7,8-tetrahydrofolate + H2O = 2-dehydropantoate + (6S)-5,6,7,8-tetrahydrofolate. The protein operates within cofactor biosynthesis; coenzyme A biosynthesis. Functionally, catalyzes the reversible reaction in which hydroxymethyl group from 5,10-methylenetetrahydrofolate is transferred onto alpha-ketoisovalerate to form ketopantoate. This is 3-methyl-2-oxobutanoate hydroxymethyltransferase from Halobacterium salinarum (strain ATCC 29341 / DSM 671 / R1).